The sequence spans 439 residues: MKKPLRWLAALTALLLPLSALAQQQGLTIDIVGGSASATPIAVIPMPYQGSGTAPQTDVSAVVGADLDRSGQFRTLPAAQIVEKPTRGTEVQFQTWRTLKQNYIVVGRVMDAGEGAYRVEYELFDVAKGERMLGLAMTARANAMRDVSHQMADAIYEKITGVRGAFWTRIAYVTASGKGGAMRYALMVADSDGYNPQTIVRSAEPLLSPNWSPDGKKLAYVSFERGNSSIYLQDIATGARELVSSFRGINGAPSFSPDGRRLALALSRSGNPEIYVMDLGSKQLTQLTNHFGIDTEPTWAPDGGSIYFTSDRGGRPQIYQVAASGGSANRVTFQGNYNATASVSFDGKKIAVAQGSGNTYRIAMMDRSLGSPSWSTLSPGSLDESPSFAPNASMVLYAAREGGRGVLYAVSSDARVRQRLVLADGDVREPAWGPYRTAH.

An N-terminal signal peptide occupies residues 1–22 (MKKPLRWLAALTALLLPLSALA).

This sequence belongs to the TolB family. As to quaternary structure, the Tol-Pal system is composed of five core proteins: the inner membrane proteins TolA, TolQ and TolR, the periplasmic protein TolB and the outer membrane protein Pal. They form a network linking the inner and outer membranes and the peptidoglycan layer.

It is found in the periplasm. Part of the Tol-Pal system, which plays a role in outer membrane invagination during cell division and is important for maintaining outer membrane integrity. The polypeptide is Tol-Pal system protein TolB (Xanthomonas axonopodis pv. citri (strain 306)).